The chain runs to 80 residues: Conotoxin Cl11.2 (80 aa).

The signal sequence occupies residues 1–19 (MKMSVTFLLILMILPLFTG). Positions 20 to 41 (EWQSGSRLSALKKRLLEKRLLQ) are excised as a propeptide. Disulfide bonds link Cys-45–Cys-59, Cys-52–Cys-63, Cys-58–Cys-68, and Cys-62–Cys-74.

This sequence belongs to the conotoxin I1 superfamily. As to expression, expressed by the venom duct.

The protein localises to the secreted. This Californiconus californicus (California cone) protein is Conotoxin Cl11.2.